The chain runs to 55 residues: ATP synthase F(0) complex subunit 8 (55 aa).

Residues 10-30 (FPIMMLSWLIFSLIIQPKLLL) traverse the membrane as a helical segment. Positions 35-55 (NPPSNKTTTTTRSNPWTWPWT) are disordered. Residues 37 to 55 (PSNKTTTTTRSNPWTWPWT) show a composition bias toward low complexity.

The protein belongs to the ATPase protein 8 family. As to quaternary structure, component of the ATP synthase complex composed at least of ATP5F1A/subunit alpha, ATP5F1B/subunit beta, ATP5MC1/subunit c (homooctomer), MT-ATP6/subunit a, MT-ATP8/subunit 8, ATP5ME/subunit e, ATP5MF/subunit f, ATP5MG/subunit g, ATP5MK/subunit k, ATP5MJ/subunit j, ATP5F1C/subunit gamma, ATP5F1D/subunit delta, ATP5F1E/subunit epsilon, ATP5PF/subunit F6, ATP5PB/subunit b, ATP5PD/subunit d, ATP5PO/subunit OSCP. ATP synthase complex consists of a soluble F(1) head domain (subunits alpha(3) and beta(3)) - the catalytic core - and a membrane F(0) domain - the membrane proton channel (subunits c, a, 8, e, f, g, k and j). These two domains are linked by a central stalk (subunits gamma, delta, and epsilon) rotating inside the F1 region and a stationary peripheral stalk (subunits F6, b, d, and OSCP).

Its subcellular location is the mitochondrion membrane. Its function is as follows. Subunit 8, of the mitochondrial membrane ATP synthase complex (F(1)F(0) ATP synthase or Complex V) that produces ATP from ADP in the presence of a proton gradient across the membrane which is generated by electron transport complexes of the respiratory chain. ATP synthase complex consist of a soluble F(1) head domain - the catalytic core - and a membrane F(1) domain - the membrane proton channel. These two domains are linked by a central stalk rotating inside the F(1) region and a stationary peripheral stalk. During catalysis, ATP synthesis in the catalytic domain of F(1) is coupled via a rotary mechanism of the central stalk subunits to proton translocation. In vivo, can only synthesize ATP although its ATP hydrolase activity can be activated artificially in vitro. Part of the complex F(0) domain. In Opisthocomus hoazin (Hoatzin), this protein is ATP synthase F(0) complex subunit 8.